The chain runs to 378 residues: Carbamoyl phosphate synthase small chain (378 aa).

Residues 1-188 (MSILKEAYLY…THFAYGTSPN (188 aa)) form a CPSase region. The L-glutamine site is built by S49, G244, and G246. Residues 192–378 (KVVAIDFGAK…FEEFAKLCCK (187 aa)) form the Glutamine amidotransferase type-1 domain. C272 (nucleophile) is an active-site residue. L-glutamine contacts are provided by L273, Q276, N314, and Y317. Active-site residues include H355 and E357.

The protein belongs to the CarA family. As to quaternary structure, composed of two chains; the small (or glutamine) chain promotes the hydrolysis of glutamine to ammonia, which is used by the large (or ammonia) chain to synthesize carbamoyl phosphate. Tetramer of heterodimers (alpha,beta)4.

The enzyme catalyses hydrogencarbonate + L-glutamine + 2 ATP + H2O = carbamoyl phosphate + L-glutamate + 2 ADP + phosphate + 2 H(+). The catalysed reaction is L-glutamine + H2O = L-glutamate + NH4(+). The protein operates within amino-acid biosynthesis; L-arginine biosynthesis; carbamoyl phosphate from bicarbonate: step 1/1. Its pathway is pyrimidine metabolism; UMP biosynthesis via de novo pathway; (S)-dihydroorotate from bicarbonate: step 1/3. In terms of biological role, small subunit of the glutamine-dependent carbamoyl phosphate synthetase (CPSase). CPSase catalyzes the formation of carbamoyl phosphate from the ammonia moiety of glutamine, carbonate, and phosphate donated by ATP, constituting the first step of 2 biosynthetic pathways, one leading to arginine and/or urea and the other to pyrimidine nucleotides. The small subunit (glutamine amidotransferase) binds and cleaves glutamine to supply the large subunit with the substrate ammonia. This is Carbamoyl phosphate synthase small chain from Helicobacter hepaticus (strain ATCC 51449 / 3B1).